The chain runs to 837 residues: MANILKTIIENDKGEIRRLEKMADKVFKYEDQMAALTDDQLKAKTVEFKERYQNGESLDSLLYEAFAVVREGAKRVLGLFPYKVQVMGGIVLHHGDVPEMRTGEGKTLTATMPVYLNALSGKGVHVVTVNEYLSERDATEMGELYSWLGLSVGINLATKSPMEKKEAYECDITYSTNSEIGFDYLRDNMVVRAENMVQRPLNYALVDEVDSILIDEARTPLIVSGANAVETSQLYHMADHYVKSLNKDDYIIDVQSKTIGLSDSGIDRAESYFKLENLYDIENVALTHFIDNALRANYIMLLDIDYVVSEEQEILIVDQFTGRTMEGRRYSDGLHQAIEAKEGVPIQDETKTSASITYQNLFRMYKKLSGMTGTGKTEEEEFREIYNIRVIPIPTNRPVQRIDHSDLLYASIESKFKAVVEDVKARYQKGQPVLVGTVAVETSDYISKKLVAAGVPHEVLNAKNHYREAQIIMNAGQRGAVTIATNMAGRGTDIKLGEGVRELGGLCVIGTERHESRRIDNQLRGRSGRQGDPGESQFYLSLEDDLMKRFGSERLKGIFERLNMSEEAIESRMLTRQVEAAQKRVEGNNYDTRKQVLQYDDVMREQREIIYAQRYDVITADRDLAPEIQSMIKRTIERVVDGHARAKQDEKLEAILNFAKYNLLPEDSITMEDLSGLSDKAIKEELFQRSLKVYDSQVSKLRDEEAVKEFQKVLILRVVDNKWTDHIDALDQLRNAVGLRGYAQNNPVVEYQAEGFRMFNDMIGSIEFDVTRLMMKAQIHEQERPQAERHISTTATRNIAAHQASMPEDLDLSQIGRNELCPCGSGKKFKNCHGKRQ.

ATP-binding positions include Gln85, 103-107, and Asp493; that span reads GEGKT. Cys821, Cys823, Cys832, and His833 together coordinate Zn(2+).

It belongs to the SecA family. In terms of assembly, monomer and homodimer. Part of the essential Sec protein translocation apparatus which comprises SecA, SecYEG and auxiliary proteins SecDF. Other proteins may also be involved. The cofactor is Zn(2+).

The protein localises to the cell membrane. The protein resides in the cytoplasm. It catalyses the reaction ATP + H2O + cellular proteinSide 1 = ADP + phosphate + cellular proteinSide 2.. In terms of biological role, part of the Sec protein translocase complex. Interacts with the SecYEG preprotein conducting channel. Has a central role in coupling the hydrolysis of ATP to the transfer of proteins into and across the cell membrane, serving as an ATP-driven molecular motor driving the stepwise translocation of polypeptide chains across the membrane. This is Protein translocase subunit SecA 1 from Streptococcus pneumoniae serotype 4 (strain ATCC BAA-334 / TIGR4).